Reading from the N-terminus, the 63-residue chain is Cecropin-B (63 aa).

An N-terminal signal peptide occupies residues 1-22 (MNFAKILSFVFALVLALSMTSA). The propeptide at 23 to 26 (APEP) is removed by a dipeptidylpeptidase. A 5-hydroxylysine; partial modification is found at K47. An Isoleucine amide modification is found at I61.

Belongs to the cecropin family. Lepidopteran-B differs from lepidopteran-A by its hydroxylated residue. In terms of tissue distribution, highest expression in fat body and hemocytes. Is also expressed in Malpighian tubules and to a much lesser extent in midgut. Not present in silk gland.

The protein resides in the secreted. In terms of biological role, cecropins have lytic and antibacterial activity against several Gram-positive and Gram-negative bacteria. In Bombyx mori (Silk moth), this protein is Cecropin-B (CECB1).